The chain runs to 191 residues: Imidazoleglycerol-phosphate dehydratase (191 aa).

It belongs to the imidazoleglycerol-phosphate dehydratase family.

The protein resides in the cytoplasm. The catalysed reaction is D-erythro-1-(imidazol-4-yl)glycerol 3-phosphate = 3-(imidazol-4-yl)-2-oxopropyl phosphate + H2O. It functions in the pathway amino-acid biosynthesis; L-histidine biosynthesis; L-histidine from 5-phospho-alpha-D-ribose 1-diphosphate: step 6/9. The protein is Imidazoleglycerol-phosphate dehydratase of Methanococcoides burtonii (strain DSM 6242 / NBRC 107633 / OCM 468 / ACE-M).